Reading from the N-terminus, the 339-residue chain is Proto-oncogene serine/threonine-protein kinase mos (339 aa).

One can recognise a Protein kinase domain in the interval 61–335 (VCLLHRLGSG…LLQKDLKAFR (275 aa)). ATP is bound by residues 67 to 75 (LGSGGFGSV) and lysine 88. The active-site Proton acceptor is aspartate 196.

This sequence belongs to the protein kinase superfamily. Ser/Thr protein kinase family. Interacts with MAP2K1/MEK1. As to expression, expressed mainly in gonadal tissues, and cardiac and skeletal muscles.

It localises to the cytoplasm. The catalysed reaction is L-seryl-[protein] + ATP = O-phospho-L-seryl-[protein] + ADP + H(+). It carries out the reaction L-threonyl-[protein] + ATP = O-phospho-L-threonyl-[protein] + ADP + H(+). Serine/threonine kinase involved in the regulation of MAPK signaling. Is an activator of the ERK1/2 signaling cascade playing an essential role in the stimulation of oocyte maturation. The polypeptide is Proto-oncogene serine/threonine-protein kinase mos (Rattus norvegicus (Rat)).